Consider the following 455-residue polypeptide: MKKDFASVTPAGKKTSVRWFIVFMLFLVTSINYADRATLSITGDSVQHDLGLDSVAMGYVFSAFGWAYVIGQLPGGWLLDRFGSKTIIALSIFFWSFFTLLQGAIGFFSAGTAIILLFALRFLVGLSEAPSFPGNGRVVASWFPSSERGTASAFFNSAQYFAIVIFSPLMGWLTHSFGWHSVFVVMGIAGILLAVIWLKTVYEPKKHPKVNEAELAYIEQGGGLISMDDSKSKQETESKWPYIKQLLTNRMLIGVYIAQYCITTLTYFFLTWFPVYLVQARGMSILEAGFVASLPALCGFAGGVLGGIVSDILLKKGRSLTFARKVPIIAGMLLSCSMIVCNYTDSAWLVVVIMSLAFFGKGFGALGWAVVSDTSPKECAGLSGGLFNTFGNIASITTPIIIGYIVNATGSFNGALVFVGANAIAAILSYLLLVGPIKRVVLKKQEQDPDQSLPV.

12 helical membrane passes run 19–39, 59–79, 87–107, 108–128, 153–173, 177–197, 253–273, 289–309, 320–340, 348–368, 386–406, and 414–434; these read WFIVFMLFLVTSINYADRATL, YVFSAFGWAYVIGQLPGGWLL, IIALSIFFWSFFTLLQGAIGF, FSAGTAIILLFALRFLVGLSE, AFFNSAQYFAIVIFSPLMGWL, FGWHSVFVVMGIAGILLAVIW, IGVYIAQYCITTLTYFFLTWF, GFVASLPALCGFAGGVLGGIV, LTFARKVPIIAGMLLSCSMIV, WLVVVIMSLAFFGKGFGALGW, LFNTFGNIASITTPIIIGYIV, and GALVFVGANAIAAILSYLLLV.

Belongs to the major facilitator superfamily. Phthalate permease family.

Its subcellular location is the cell membrane. It catalyses the reaction galactarate(in) + H(+)(in) = galactarate(out) + H(+)(out). It carries out the reaction D-glucarate(in) + H(+)(in) = D-glucarate(out) + H(+)(out). In terms of biological role, probably involved in the uptake of galactarate and/or D-glucarate. In Bacillus subtilis (strain 168), this protein is Probable galactarate/D-glucarate transporter GudP.